The following is a 508-amino-acid chain: Cell division protein FtsZ (508 aa).

GTP-binding positions include 24–28 (GAGGN), 111–113 (GTG), E142, R146, and D190. 2 disordered regions span residues 342–389 (IAET…SAPQ) and 428–508 (VAEE…RLAN). Over residues 464-482 (QQASAPQAQARSAQSARPQ) the composition is skewed to low complexity.

It belongs to the FtsZ family. As to quaternary structure, homodimer. Polymerizes to form a dynamic ring structure in a strictly GTP-dependent manner. Interacts directly with several other division proteins.

Its subcellular location is the cytoplasm. Essential cell division protein that forms a contractile ring structure (Z ring) at the future cell division site. The regulation of the ring assembly controls the timing and the location of cell division. One of the functions of the FtsZ ring is to recruit other cell division proteins to the septum to produce a new cell wall between the dividing cells. Binds GTP and shows GTPase activity. The protein is Cell division protein FtsZ of Caulobacter vibrioides (strain ATCC 19089 / CIP 103742 / CB 15) (Caulobacter crescentus).